The chain runs to 503 residues: ATP synthase subunit alpha (503 aa).

169–176 serves as a coordination point for ATP; that stretch reads GDRKTGKT.

This sequence belongs to the ATPase alpha/beta chains family. In terms of assembly, F-type ATPases have 2 components, CF(1) - the catalytic core - and CF(0) - the membrane proton channel. CF(1) has five subunits: alpha(3), beta(3), gamma(1), delta(1), epsilon(1). CF(0) has three main subunits: a(1), b(2) and c(9-12). The alpha and beta chains form an alternating ring which encloses part of the gamma chain. CF(1) is attached to CF(0) by a central stalk formed by the gamma and epsilon chains, while a peripheral stalk is formed by the delta and b chains.

It localises to the cell membrane. The catalysed reaction is ATP + H2O + 4 H(+)(in) = ADP + phosphate + 5 H(+)(out). Functionally, produces ATP from ADP in the presence of a proton gradient across the membrane. The alpha chain is a regulatory subunit. This is ATP synthase subunit alpha from Ligilactobacillus salivarius (strain UCC118) (Lactobacillus salivarius).